The chain runs to 358 residues: Guanidino acid hydrolase, mitochondrial (358 aa).

The transit peptide at 1–36 (MLRLLRSSWARGLGSGVATWRPSAGLFRPGCPGIRQ) directs the protein to the mitochondrion. The disordered stretch occupies residues 31–56 (CPGIRQASGASDTPHHQSPSSESPVQ). Positions 46–56 (HQSPSSESPVQ) are enriched in low complexity. Residues Gln168 and His193 each coordinate Mn(2+). Lys199 carries the post-translational modification N6-acetyllysine. Position 223 is an N6-acetyllysine; alternate (Lys223). Lys223 is subject to N6-succinyllysine; alternate. Residue Asp284 participates in Mn(2+) binding.

It belongs to the arginase family. Agmatinase subfamily. It depends on Mn(2+) as a cofactor. Detected only in liver.

It localises to the mitochondrion. It catalyses the reaction 3-guanidinopropanoate + H2O = urea + beta-alanine. It carries out the reaction 4-guanidinobutanoate + H2O = urea + 4-aminobutanoate. The catalysed reaction is taurocyamine + H2O = urea + taurine. The enzyme catalyses L-arginine + H2O = urea + L-ornithine. It participates in nitrogen metabolism; urea cycle; L-ornithine and urea from L-arginine: step 1/1. In terms of biological role, hydrolyzes linear guanidino acids to form urea and the corresponding amines. Displays specificity for substrates having a negatively charged head group and short chains including taurocyamine, guanidino propanoic and butanoic acids. May protect cells by detoxifying potentially harmful amounts of guanidino acids. Metabolizes L-arginine with low efficiency. The protein is Guanidino acid hydrolase, mitochondrial (Agmat) of Mus musculus (Mouse).